The primary structure comprises 492 residues: E3 ubiquitin-protein ligase ARIH2 (492 aa).

A compositionally biased stretch (polar residues) spans 1–11 (MSVDMNSQGSD). The segment at 1–37 (MSVDMNSQGSDSNEEDYDPNCEEEEEEEEDPGDIEDY) is disordered. Acidic residues predominate over residues 12-36 (SNEEDYDPNCEEEEEEEEDPGDIED). The tract at residues 64-111 (TYKESEGALHEHMTSLASVLKVSHSVAKLILVNFHWQVSEILDRYRSN) is UBA-like. Positions 134-343 (PPHHCAVCMQ…SEYYECSRYK (210 aa)) are TRIAD supradomain. Zn(2+) contacts are provided by cysteine 138, cysteine 141, cysteine 155, histidine 157, cysteine 160, cysteine 163, cysteine 182, cysteine 187, cysteine 227, cysteine 232, cysteine 248, cysteine 251, cysteine 256, cysteine 259, histidine 264, cysteine 269, cysteine 296, and cysteine 299. The RING-type 1 zinc finger occupies 138–187 (CAVCMQFVRKENLLSLACQHQFCRSCWEQHCSVLVKDGVGVGISCMAQDC). Residues 207–269 (DKYRRYLFRD…RQMYHAPTDC (63 aa)) form an IBR-type zinc finger. The RING-type 2; atypical zinc-finger motif lies at 296–325 (CPKCNICIEKNGGCNHMQCSKCKHDFCWMC). Cysteine 309 is an active-site residue. Residues cysteine 314, cysteine 317, cysteine 322, cysteine 325, histidine 332, and cysteine 339 each contribute to the Zn(2+) site. A Phosphoserine modification is found at serine 352. Residues 358–492 (REALKKYLFY…RTLLKDFHDT (135 aa)) form an ariadne domain region.

Belongs to the RBR family. Ariadne subfamily. Interacts (via RING-type zinc finger 1) with UBE2L3. Interacts (via RING-type zinc finger 2) with UBE2N. Interacts with neddylated CUL5. Interacts (via RING-type 2) with GFI1B. Interacts with GFI1; prevents its ubiquitination and proteasomal degradation. Interacts with DCUN1D1 (via UBA-like domain); promotes DCUN1D1 ubiquitination. In terms of processing, ubiquitinated. Ubiquitination promotes proteasomal degradation.

The protein localises to the nucleus. It is found in the cytoplasm. The catalysed reaction is [E2 ubiquitin-conjugating enzyme]-S-ubiquitinyl-L-cysteine + [acceptor protein]-L-lysine = [E2 ubiquitin-conjugating enzyme]-L-cysteine + [acceptor protein]-N(6)-ubiquitinyl-L-lysine.. It participates in protein modification; protein ubiquitination. Autoinhibited by the ariadne domain, which masks the second RING-type zinc finger that contains the active site and inhibits the E3 activity. Inhibition is relieved upon binding to neddylated cullin-RING ubiquitin ligase complexes, which activate the E3 ligase activity of ARIH1. Functionally, E3 ubiquitin-protein ligase, which catalyzes ubiquitination of target proteins together with ubiquitin-conjugating enzyme E2 UBE2L3. Acts as an atypical E3 ubiquitin-protein ligase by working together with cullin-5-RING ubiquitin ligase complex (ECS complex, also named CRL5 complex) and initiating ubiquitination of ECS substrates: associates with ECS complex and specifically mediates addition of the first ubiquitin on ECS targets. The initial ubiquitin is then elongated. E3 ubiquitin-protein ligase activity is activated upon binding to neddylated form of the ECS complex. Mediates 'Lys-6', 'Lys-48'- and 'Lys-63'-linked polyubiquitination. May play a role in myelopoiesis. The sequence is that of E3 ubiquitin-protein ligase ARIH2 (Arih2) from Mus musculus (Mouse).